Reading from the N-terminus, the 440-residue chain is Trigger factor (440 aa).

Positions 176–261 (GDKVVIDYQN…VKSIYVVKDV (86 aa)) constitute a PPIase FKBP-type domain.

The protein belongs to the FKBP-type PPIase family. Tig subfamily.

The protein resides in the cytoplasm. It catalyses the reaction [protein]-peptidylproline (omega=180) = [protein]-peptidylproline (omega=0). Functionally, involved in protein export. Acts as a chaperone by maintaining the newly synthesized protein in an open conformation. Functions as a peptidyl-prolyl cis-trans isomerase. The chain is Trigger factor from Ehrlichia canis (strain Jake).